Consider the following 912-residue polypeptide: DNA ligase 4 (912 aa).

Glutamate 276, threonine 277, lysine 278, leucine 279, arginine 283, glutamate 336, lysine 350, phenylalanine 372, glutamate 432, lysine 437, lysine 454, and lysine 456 together coordinate ATP. The active-site N6-AMP-lysine intermediate is lysine 278. Glutamate 336 contacts Mg(2+). A Mg(2+)-binding site is contributed by glutamate 432. Residues 615 to 625 (LASKHLYIDEY) form a required for catalytic activity region. 2 BRCT domains span residues 659–748 (KVSS…PAFM) and 809–912 (CKLC…QFLI).

This sequence belongs to the ATP-dependent DNA ligase family. In terms of assembly, interacts with XRCC4; the LIG4-XRCC4 subcomplex has a 1:2 stoichiometry. Component of the core long-range non-homologous end joining (NHEJ) complex (also named DNA-PK complex) composed of PRKDC, LIG4, XRCC4, XRCC6/Ku70, XRCC5/Ku86 and NHEJ1/XLF. Additional component of the NHEJ complex includes PAXX. Following autophosphorylation, PRKDC dissociates from DNA, leading to formation of the short-range NHEJ complex, composed of LIG4, XRCC4, XRCC6/Ku70, XRCC5/Ku86 and NHEJ1/XLF. Mg(2+) is required as a cofactor.

It is found in the nucleus. It carries out the reaction ATP + (deoxyribonucleotide)n-3'-hydroxyl + 5'-phospho-(deoxyribonucleotide)m = (deoxyribonucleotide)n+m + AMP + diphosphate.. Functionally, DNA ligase involved in DNA non-homologous end joining (NHEJ); required for double-strand break (DSB) repair and V(D)J recombination. Catalyzes the NHEJ ligation step of the broken DNA during DSB repair by resealing the DNA breaks after the gap filling is completed. Joins single-strand breaks in a double-stranded polydeoxynucleotide in an ATP-dependent reaction. LIG4 is mechanistically flexible: it can ligate nicks as well as compatible DNA overhangs alone, while in the presence of XRCC4, it can ligate ends with 2-nucleotides (nt) microhomology and 1-nt gaps. Forms a subcomplex with XRCC4; the LIG4-XRCC4 subcomplex is responsible for the NHEJ ligation step and XRCC4 enhances the joining activity of LIG4. The chain is DNA ligase 4 from Gallus gallus (Chicken).